The following is a 630-amino-acid chain: tRNA uridine 5-carboxymethylaminomethyl modification enzyme MnmG (630 aa).

FAD contacts are provided by residues 14-19 (GAGHAG), V126, and S181. Position 273–287 (273–287 (GPRYCPSIEDKVVRF)) interacts with NAD(+). Q370 lines the FAD pocket.

Belongs to the MnmG family. Homodimer. Heterotetramer of two MnmE and two MnmG subunits. It depends on FAD as a cofactor.

It localises to the cytoplasm. NAD-binding protein involved in the addition of a carboxymethylaminomethyl (cmnm) group at the wobble position (U34) of certain tRNAs, forming tRNA-cmnm(5)s(2)U34. In Alkaliphilus metalliredigens (strain QYMF), this protein is tRNA uridine 5-carboxymethylaminomethyl modification enzyme MnmG.